The sequence spans 152 residues: SMN complex subunit smn1 (152 aa).

An interacts with yip11/gem2 region spans residues 26 to 51; that stretch reads KKYHSIEAKGGVSDPDSRLDGEKLIS. The tract at residues 88 to 110 is disordered; that stretch reads DNKGLSDEKPETRAAETHQEFME. Over residues 91–108 the composition is skewed to basic and acidic residues; it reads GLSDEKPETRAAETHQEF. Residues 130 to 152 are may interact with gem8; that stretch reads SWYYAGYYTGLAEGLAKSEQRKD.

The protein belongs to the SMN family. As to quaternary structure, homooligomer; may form homodimers and homotetramers. Part of the core SMN complex at least composed of smn1, yip11/gem2, gem6, gem7 and gem8. Part of the SMN-Sm complex. Interacts with yip11/gem2; the interaction is direct. Interacts with gem8; the interaction is direct. Interacts with proteins of the Sm complex, including smn1, smb1, smd1, smd2 and smd3.

The protein resides in the nucleus. Its function is as follows. The SMN complex catalyzes the assembly of small nuclear ribonucleoproteins (snRNPs), the building blocks of the spliceosome, and thereby plays an important role in the splicing of cellular pre-mRNAs. Most spliceosomal snRNPs contain a common set of Sm proteins smb1, smd1, smd2, smd3, sme1, smf1 and smg1 that assemble in a heptameric protein ring on the Sm site of the small nuclear RNA to form the core snRNP (Sm core). In the cytosol, the Sm proteins smd1, smd2, sme1, smf1 and smg1 (5Sm) are trapped in an inactive 6S pICln-Sm complex by the chaperone saf5 that controls the assembly of the core snRNP. To assemble core snRNPs, the SMN complex accepts the trapped 5Sm proteins from saf5 forming an intermediate. Binding of snRNA inside 5Sm triggers eviction of the SMN complex, thereby allowing binding of smd3 and smb1 to complete assembly of the core snRNP. Within the SMN complex, smn1 acts as a structural backbone and together with yip11/gem2 it gathers the Sm complex subunits. The polypeptide is SMN complex subunit smn1 (Schizosaccharomyces pombe (strain 972 / ATCC 24843) (Fission yeast)).